The chain runs to 203 residues: Urease accessory protein UreG (203 aa).

Residue 14–21 (GPVGSGKT) coordinates GTP.

Belongs to the SIMIBI class G3E GTPase family. UreG subfamily. Homodimer. UreD, UreF and UreG form a complex that acts as a GTP-hydrolysis-dependent molecular chaperone, activating the urease apoprotein by helping to assemble the nickel containing metallocenter of UreC. The UreE protein probably delivers the nickel.

The protein localises to the cytoplasm. Facilitates the functional incorporation of the urease nickel metallocenter. This process requires GTP hydrolysis, probably effectuated by UreG. This chain is Urease accessory protein UreG, found in Sinorhizobium medicae (strain WSM419) (Ensifer medicae).